Here is a 165-residue protein sequence, read N- to C-terminus: Small ribosomal subunit protein uS5 (165 aa).

Positions 10–73 (LNEKLIAVNR…EKARRNMVTV (64 aa)) constitute an S5 DRBM domain.

This sequence belongs to the universal ribosomal protein uS5 family. Part of the 30S ribosomal subunit. Contacts proteins S4 and S8.

Functionally, with S4 and S12 plays an important role in translational accuracy. Located at the back of the 30S subunit body where it stabilizes the conformation of the head with respect to the body. The sequence is that of Small ribosomal subunit protein uS5 from Photobacterium profundum (strain SS9).